We begin with the raw amino-acid sequence, 213 residues long: Guanylate kinase (213 aa).

Positions 6–186 (GLLIILSSPS…TEERLKTIVS (181 aa)) constitute a Guanylate kinase-like domain. 13 to 20 (SPSGAGKS) contacts ATP.

Belongs to the guanylate kinase family.

Its subcellular location is the cytoplasm. The catalysed reaction is GMP + ATP = GDP + ADP. Functionally, essential for recycling GMP and indirectly, cGMP. The polypeptide is Guanylate kinase (Ruegeria pomeroyi (strain ATCC 700808 / DSM 15171 / DSS-3) (Silicibacter pomeroyi)).